The primary structure comprises 278 residues: MRTQGIKPRIREILSKELPEELVKLLPKRWVRIGDVLLLPLRPELEPYKHRIAEVYAEVLGVKTVLRKGHIHGETRKPDYELLYGSDTVTVHVENGIKYKLDVAKIMFSPANVKERVRMAKVAKPDELVVDMFAGIGHLSLPIAVYGKAKVIAIEKDPYTFKFLVENIHLNKVEDRMSAYNMDNRDFPGENIADRILMGYVVRTHEFIPKALSIAKDGAIIHYHNTVPEKLMPREPFETFKRITKEYGYDVEKLNELKIKRYAPGVWHVVLDLRVFKS.

S-adenosyl-L-methionine contacts are provided by residues S109, R116, E155, and 183-184; that span reads DN.

The protein belongs to the class I-like SAM-binding methyltransferase superfamily. TRM5/TYW2 family.

It is found in the cytoplasm. It carries out the reaction 4-demethylwyosine(37) in tRNA(Phe) + S-adenosyl-L-methionine = 4-demethyl-7-[(3S)-3-amino-3-carboxypropyl]wyosine(37) in tRNA(Phe) + S-methyl-5'-thioadenosine + H(+). S-adenosyl-L-methionine-dependent transferase that acts as a component of the wyosine derivatives biosynthesis pathway. Catalyzes the transfer of the alpha-amino-alpha-carboxypropyl (acp) group from S-adenosyl-L-methionine to 4-demethylwyosine (imG-14), forming 7-aminocarboxypropyl-demethylwyosine (wybutosine-86) at position 37 of tRNA(Phe). The polypeptide is tRNA(Phe) (4-demethylwyosine(37)-C(7)) aminocarboxypropyltransferase (Pyrococcus horikoshii (strain ATCC 700860 / DSM 12428 / JCM 9974 / NBRC 100139 / OT-3)).